Reading from the N-terminus, the 1021-residue chain is Spindle assembly checkpoint serine/threonine-protein kinase BUB1 (1021 aa).

The segment at 1–35 is disordered; that stretch reads MNLDLGSTVRGYESDKDTFPQSKGVSSSQKEQHSQ. Polar residues predominate over residues 19–35; the sequence is FPQSKGVSSSQKEQHSQ. The 166-residue stretch at 47–212 folds into the BUB1 N-terminal domain; sequence LLNDLEDMDD…VPDSRERLKG (166 aa). Residues 289-359 form an interaction with BUB3 region; it reads NKKTSIYADQ…QRRGKKHTED (71 aa). Disordered regions lie at residues 351–370, 398–420, 511–545, and 567–600; these read RRGKKHTEDYTSDKNRKKRK, FKDDDNPSQSTHHKNTQVQVQTT, VKDPKQETVSQQTTSTNETNDRYERLSNSSTRPEK, and PKEQIRTEDKKSGDNTETQTQLTSTTIQSSPFLT. Polar residues predominate over residues 517 to 528; that stretch reads ETVSQQTTSTNE. Residues 569 to 580 are compositionally biased toward basic and acidic residues; sequence EQIRTEDKKSGD. A compositionally biased stretch (low complexity) spans 582–596; the sequence is TETQTQLTSTTIQSS. The region spanning 705 to 1021 is the Protein kinase domain; the sequence is YCIRGELGEG…QYKGKPSRRF (317 aa). Positions 715, 716, and 717 each coordinate ATP. Asp833 acts as the Proton acceptor in catalysis. ATP is bound by residues Asp837, Asn838, and Asp871.

It belongs to the protein kinase superfamily. Ser/Thr protein kinase family. BUB1 subfamily. As to quaternary structure, part of complex consisting of MAD1, BUB1 and BUB3 after activation of spindle checkpoint. Part of the BUB1-BUB3 complex, composed of BUB1 and BUB3. Interacts with SPC105 (via phosphorylated MELT motifs); the interaction occurs when part of the BUB1-BUB3 complex. Interacts with SKP1; the interaction is direct. Mg(2+) is required as a cofactor. In terms of processing, autophosphorylated.

It is found in the nucleus. It localises to the chromosome. The protein resides in the centromere. The protein localises to the kinetochore. The enzyme catalyses L-seryl-[protein] + ATP = O-phospho-L-seryl-[protein] + ADP + H(+). It carries out the reaction L-threonyl-[protein] + ATP = O-phospho-L-threonyl-[protein] + ADP + H(+). Functionally, involved in mitotic spindle assembly checkpoint signaling, a process that delays anaphase until chromosomes are bioriented on the spindle, and in the repair of incorrect mitotic kinetochore-spindle microtubule attachments. The formation of a MAD1-BUB1-BUB3 complex seems to be required for the spindle checkpoint mechanism. Phosphorylates BUB3. Also autophosphorylates. Associates with centromere (CEN) DNA via interaction with SKP1. The association with SKP1 is required for the mitotic delay induced by kinetochore tension defects, but not for the arrest induced by spindle depolymerization or kinetochore assembly defects. The protein is Spindle assembly checkpoint serine/threonine-protein kinase BUB1 (BUB1) of Saccharomyces cerevisiae (strain ATCC 204508 / S288c) (Baker's yeast).